Reading from the N-terminus, the 977-residue chain is Kinesin-like protein KIN-14D (977 aa).

Over residues 1-13 the composition is skewed to low complexity; sequence MSSSNNAAAAAAS. The disordered stretch occupies residues 1–20; that stretch reads MSSSNNAAAAAASPDPSRRR. One can recognise a Calponin-homology (CH) domain in the interval 17–118; that stretch reads SRRREDVVGW…CILALKDRFG (102 aa). Residues 297–384 adopt a coiled-coil conformation; it reads KAEETQRIED…TKRRIELEEL (88 aa). The Kinesin motor domain occupies 472-800; the sequence is NIRVYCRIRP…LKFAERVSGV (329 aa). Residue 556–563 participates in ATP binding; that stretch reads GQTGSGKT. Positions 812-847 form a coiled coil; the sequence is KEGKDVKELMDQLSLLKDTISKKDEEIDRLQLLNSS. Residues 852 to 977 form a disordered region; that stretch reads PTRQADSVLK…RNNSTLKRGP (126 aa). Composition is skewed to polar residues over residues 861 to 879 and 956 to 977; these read KHSS…TSVG and RKSS…KRGP.

This sequence belongs to the TRAFAC class myosin-kinesin ATPase superfamily. Kinesin family. KIN-14 subfamily.

The sequence is that of Kinesin-like protein KIN-14D from Oryza sativa subsp. japonica (Rice).